Here is a 367-residue protein sequence, read N- to C-terminus: Cobalt-precorrin-5B C(1)-methyltransferase (367 aa).

It belongs to the CbiD family.

It catalyses the reaction Co-precorrin-5B + S-adenosyl-L-methionine = Co-precorrin-6A + S-adenosyl-L-homocysteine. Its pathway is cofactor biosynthesis; adenosylcobalamin biosynthesis; cob(II)yrinate a,c-diamide from sirohydrochlorin (anaerobic route): step 6/10. Catalyzes the methylation of C-1 in cobalt-precorrin-5B to form cobalt-precorrin-6A. The protein is Cobalt-precorrin-5B C(1)-methyltransferase of Thermosynechococcus vestitus (strain NIES-2133 / IAM M-273 / BP-1).